We begin with the raw amino-acid sequence, 855 residues long: DNA mismatch repair protein MutS (855 aa).

Residue 616-623 (GPNMGGKS) participates in ATP binding.

It belongs to the DNA mismatch repair MutS family.

Functionally, this protein is involved in the repair of mismatches in DNA. It is possible that it carries out the mismatch recognition step. This protein has a weak ATPase activity. The sequence is that of DNA mismatch repair protein MutS from Salmonella gallinarum (strain 287/91 / NCTC 13346).